The primary structure comprises 119 residues: Small ribosomal subunit protein bS16 (119 aa).

The protein belongs to the bacterial ribosomal protein bS16 family.

This chain is Small ribosomal subunit protein bS16, found in Amoebophilus asiaticus (strain 5a2).